The chain runs to 39 residues: Cytochrome b559 subunit beta (39 aa).

The helical transmembrane segment at 14–30 threads the bilayer; sequence WLAIHGLAVPTVFFLGS. H18 serves as a coordination point for heme.

As to quaternary structure, heterodimer of an alpha subunit and a beta subunit. PSII is composed of 1 copy each of membrane proteins PsbA, PsbB, PsbC, PsbD, PsbE, PsbF, PsbH, PsbI, PsbJ, PsbK, PsbL, PsbM, PsbT, PsbX, PsbY, PsbZ, Psb30/Ycf12, at least 3 peripheral proteins of the oxygen-evolving complex and a large number of cofactors. It forms dimeric complexes. The cofactor is heme b. The N-terminus is blocked.

It localises to the plastid. The protein resides in the chloroplast thylakoid membrane. Functionally, this b-type cytochrome is tightly associated with the reaction center of photosystem II (PSII). PSII is a light-driven water:plastoquinone oxidoreductase that uses light energy to abstract electrons from H(2)O, generating O(2) and a proton gradient subsequently used for ATP formation. It consists of a core antenna complex that captures photons, and an electron transfer chain that converts photonic excitation into a charge separation. In Spinacia oleracea (Spinach), this protein is Cytochrome b559 subunit beta.